We begin with the raw amino-acid sequence, 431 residues long: Serine--tRNA ligase (431 aa).

L-serine is bound at residue 235–237; sequence TAE. ATP contacts are provided by residues 266–268 and Val282; that span reads RRE. Glu289 serves as a coordination point for L-serine. ATP is bound at residue 353-356; that stretch reads EASS. Ser389 provides a ligand contact to L-serine.

The protein belongs to the class-II aminoacyl-tRNA synthetase family. Type-1 seryl-tRNA synthetase subfamily. Homodimer. The tRNA molecule binds across the dimer.

Its subcellular location is the cytoplasm. It carries out the reaction tRNA(Ser) + L-serine + ATP = L-seryl-tRNA(Ser) + AMP + diphosphate + H(+). It catalyses the reaction tRNA(Sec) + L-serine + ATP = L-seryl-tRNA(Sec) + AMP + diphosphate + H(+). It functions in the pathway aminoacyl-tRNA biosynthesis; selenocysteinyl-tRNA(Sec) biosynthesis; L-seryl-tRNA(Sec) from L-serine and tRNA(Sec): step 1/1. Its function is as follows. Catalyzes the attachment of serine to tRNA(Ser). Is also able to aminoacylate tRNA(Sec) with serine, to form the misacylated tRNA L-seryl-tRNA(Sec), which will be further converted into selenocysteinyl-tRNA(Sec). The protein is Serine--tRNA ligase of Chlorobium phaeobacteroides (strain DSM 266 / SMG 266 / 2430).